Here is a 268-residue protein sequence, read N- to C-terminus: Shikimate kinase (268 aa).

Position 70-80 (70-80 (PSGYGLKSSSA)) interacts with ATP.

This sequence belongs to the GHMP kinase family. Archaeal shikimate kinase subfamily.

It localises to the cytoplasm. It carries out the reaction shikimate + ATP = 3-phosphoshikimate + ADP + H(+). Its pathway is metabolic intermediate biosynthesis; chorismate biosynthesis; chorismate from D-erythrose 4-phosphate and phosphoenolpyruvate: step 5/7. This chain is Shikimate kinase (aroK), found in Thermoplasma acidophilum (strain ATCC 25905 / DSM 1728 / JCM 9062 / NBRC 15155 / AMRC-C165).